The sequence spans 111 residues: Small ribosomal subunit protein bS6 (111 aa).

Belongs to the bacterial ribosomal protein bS6 family.

In terms of biological role, binds together with bS18 to 16S ribosomal RNA. The sequence is that of Small ribosomal subunit protein bS6 from Francisella philomiragia subsp. philomiragia (strain ATCC 25017 / CCUG 19701 / FSC 153 / O#319-036).